The sequence spans 179 residues: Endoribonuclease YbeY (179 aa).

Residues histidine 148, histidine 152, and histidine 158 each contribute to the Zn(2+) site.

This sequence belongs to the endoribonuclease YbeY family. Requires Zn(2+) as cofactor.

Its subcellular location is the cytoplasm. Its function is as follows. Single strand-specific metallo-endoribonuclease involved in late-stage 70S ribosome quality control and in maturation of the 3' terminus of the 16S rRNA. The sequence is that of Endoribonuclease YbeY from Prochlorococcus marinus (strain MIT 9215).